We begin with the raw amino-acid sequence, 382 residues long: D-galactonate dehydratase (382 aa).

Aspartate 183 is a Mg(2+) binding site. The Proton donor role is filled by histidine 185. Mg(2+)-binding residues include glutamate 209 and glutamate 235. The Proton acceptor role is filled by histidine 285.

The protein belongs to the mandelate racemase/muconate lactonizing enzyme family. GalD subfamily. Mg(2+) serves as cofactor.

It catalyses the reaction D-galactonate = 2-dehydro-3-deoxy-D-galactonate + H2O. It functions in the pathway carbohydrate acid metabolism; D-galactonate degradation; D-glyceraldehyde 3-phosphate and pyruvate from D-galactonate: step 1/3. In terms of biological role, catalyzes the dehydration of D-galactonate to 2-keto-3-deoxy-D-galactonate. This is D-galactonate dehydratase from Klebsiella pneumoniae (strain 342).